Reading from the N-terminus, the 468-residue chain is UDP-glucosyl transferase 74CD1 (468 aa).

Gly20 serves as a coordination point for UDP-alpha-D-glucose. His21 functions as the Proton acceptor in the catalytic mechanism. The Charge relay role is filled by Asp114. UDP-alpha-D-glucose-binding residues include Ser292, Trp344, Gln347, His362, Trp365, Asn366, Ser367, Glu370, Asp386, and Gln387.

It belongs to the UDP-glycosyltransferase family. Mainly expressed in flowers, flower buds and young leaves, and, to a lesser extent, in old leaves, stems and roots.

It participates in secondary metabolite biosynthesis; terpenoid biosynthesis. In terms of biological role, component of the oleanane-type triterpene saponins (e.g. saponarioside A and saponarioside B) biosynthetic pathway, leading to the production of natural products with detergent properties used as traditional sources of soap. A glycosyltransferase that, together with SDR1, mediates the conversion of QA-tri to QA-triF; UGT74CD1 may transfer 4-keto-6-deoxy-glucose to QA-tri, which is in turn reduced to D-fucose by SDR1, thus leading to QA-triF formation via the initiation of the C-28 sugar chain. This chain is UDP-glucosyl transferase 74CD1, found in Saponaria officinalis (Common soapwort).